The sequence spans 372 residues: Delta-type opioid receptor (372 aa).

Residues 1–47 are Extracellular-facing; it reads MEPAPSAGAELQPPLFANASDAYPSACPSAGANASGPPGARSASSLA. 2 N-linked (GlcNAc...) asparagine glycosylation sites follow: N18 and N33. Residues 48–75 form a helical membrane-spanning segment; the sequence is LAIAITALYSAVCAVGLLGNVLVMFGIV. Over 76–85 the chain is Cytoplasmic; it reads RYTKMKTATN. A helical membrane pass occupies residues 86 to 110; the sequence is IYIFNLALADALATSTLPFQSAKYL. The Extracellular segment spans residues 111-122; sequence METWPFGELLCK. C121 and C198 are disulfide-bonded. A helical membrane pass occupies residues 123–144; sequence AVLSIDYYNMFTSIFTLTMMSV. The Cytoplasmic segment spans residues 145 to 163; it reads DRYIAVCHPVKALDFRTPA. Residues 164–186 traverse the membrane as a helical segment; the sequence is KAKLINICIWVLASGVGVPIMVM. Over 187–206 the chain is Extracellular; the sequence is AVTRPRDGAVVCMLQFPSPS. Residues 207–238 traverse the membrane as a helical segment; that stretch reads WYWDTVTKICVFLFAFVVPILIITVCYGLMLL. Residues 239–261 are Cytoplasmic-facing; the sequence is RLRSVRLLSGSKEKDRSLRRITR. Residues 262-284 form a helical membrane-spanning segment; it reads MVLVVVGAFVVCWAPIHIFVIVW. Over 285–299 the chain is Extracellular; that stretch reads TLVDIDRRDPLVVAA. Residues 300-321 traverse the membrane as a helical segment; that stretch reads LHLCIALGYANSSLNPVLYAFL. Over 322–372 the chain is Cytoplasmic; sequence DENFKRCFRQLCRKPCGRPDPSSFSRAREATARERVTACTPSDGPGGGAAA. The S-palmitoyl cysteine moiety is linked to residue C333. The tract at residues 340 to 372 is disordered; the sequence is PDPSSFSRAREATARERVTACTPSDGPGGGAAA. Residues 347 to 357 are compositionally biased toward basic and acidic residues; the sequence is RAREATARERV.

Belongs to the G-protein coupled receptor 1 family. In terms of assembly, may form homooligomers. Forms a heterodimer with OPRM1. Interacts with GPRASP1. Interacts with RTP4; the interaction promotes cell surface localization of the OPRD1-OPRM1 heterodimer. In terms of processing, N-glycosylated. Ubiquitinated. A basal ubiquitination seems not to be related to degradation. Ubiquitination is increased upon formation of OPRM1:OPRD1 oligomers leading to proteasomal degradation; the ubiquitination is diminished by RTP4. As to expression, detected in oocytes (at protein level). Detected in brain cortex, hypothalamus, hippocampus and olfactory bulb. Detected in oocytes.

The protein localises to the cell membrane. Functionally, G-protein coupled receptor that functions as a receptor for endogenous enkephalins and for a subset of other opioids. Ligand binding causes a conformation change that triggers signaling via guanine nucleotide-binding proteins (G proteins) and modulates the activity of down-stream effectors, such as adenylate cyclase. Signaling leads to the inhibition of adenylate cyclase activity. Inhibits neurotransmitter release by reducing calcium ion currents and increasing potassium ion conductance. Plays a role in the perception of pain and in opiate-mediated analgesia. Plays a role in developing analgesic tolerance to morphine. This Homo sapiens (Human) protein is Delta-type opioid receptor (OPRD1).